The chain runs to 341 residues: DnaJ homolog subfamily C member 22 (341 aa).

The TM2 domain maps to 3 to 50; the sequence is KGLLVTYALWAVGGPAGLHHLYLGRDSHALLWMLTLGGGGLGWLWEFW. Transmembrane regions (helical) follow at residues 5–25, 30–50, 81–101, 105–125, 135–155, 185–205, and 218–238; these read LLVT…HLYL, HALL…WEFW, FAAQ…SLSS, FYIV…AAVG, LGAA…ILPI, LGLA…CNTA, and FLNW…VLLL. One can recognise a J domain in the interval 277–341; it reads LAYQVLGLSE…QPRKPRGSRR (65 aa).

Its subcellular location is the membrane. Its function is as follows. May function as a co-chaperone. The chain is DnaJ homolog subfamily C member 22 (DNAJC22) from Pongo abelii (Sumatran orangutan).